We begin with the raw amino-acid sequence, 267 residues long: 4-hydroxy-tetrahydrodipicolinate reductase (267 aa).

NAD(+)-binding positions include 8–13 (GAAGRM) and Asp34. Arg35 serves as a coordination point for NADP(+). NAD(+) is bound by residues 98–100 (GTT) and 122–125 (AANF). Catalysis depends on His155, which acts as the Proton donor/acceptor. Residue His156 coordinates (S)-2,3,4,5-tetrahydrodipicolinate. The active-site Proton donor is Lys159. 165–166 (GT) is a binding site for (S)-2,3,4,5-tetrahydrodipicolinate.

Belongs to the DapB family.

Its subcellular location is the cytoplasm. It catalyses the reaction (S)-2,3,4,5-tetrahydrodipicolinate + NAD(+) + H2O = (2S,4S)-4-hydroxy-2,3,4,5-tetrahydrodipicolinate + NADH + H(+). The catalysed reaction is (S)-2,3,4,5-tetrahydrodipicolinate + NADP(+) + H2O = (2S,4S)-4-hydroxy-2,3,4,5-tetrahydrodipicolinate + NADPH + H(+). The protein operates within amino-acid biosynthesis; L-lysine biosynthesis via DAP pathway; (S)-tetrahydrodipicolinate from L-aspartate: step 4/4. Catalyzes the conversion of 4-hydroxy-tetrahydrodipicolinate (HTPA) to tetrahydrodipicolinate. This Pseudomonas putida (strain GB-1) protein is 4-hydroxy-tetrahydrodipicolinate reductase.